Reading from the N-terminus, the 373-residue chain is Lipoyl synthase, mitochondrial (373 aa).

Residues Met-1–Ala-26 constitute a mitochondrion transit peptide. Residues Cys-105, Cys-110, Cys-116, Cys-136, Cys-140, Cys-143, and Ser-351 each contribute to the [4Fe-4S] cluster site. Residues Glu-121 to His-340 enclose the Radical SAM core domain.

Belongs to the radical SAM superfamily. Lipoyl synthase family. The cofactor is [4Fe-4S] cluster.

The protein localises to the mitochondrion. It carries out the reaction [[Fe-S] cluster scaffold protein carrying a second [4Fe-4S](2+) cluster] + N(6)-octanoyl-L-lysyl-[protein] + 2 oxidized [2Fe-2S]-[ferredoxin] + 2 S-adenosyl-L-methionine + 4 H(+) = [[Fe-S] cluster scaffold protein] + N(6)-[(R)-dihydrolipoyl]-L-lysyl-[protein] + 4 Fe(3+) + 2 hydrogen sulfide + 2 5'-deoxyadenosine + 2 L-methionine + 2 reduced [2Fe-2S]-[ferredoxin]. The protein operates within protein modification; protein lipoylation via endogenous pathway; protein N(6)-(lipoyl)lysine from octanoyl-[acyl-carrier-protein]: step 2/2. Functionally, catalyzes the radical-mediated insertion of two sulfur atoms into the C-6 and C-8 positions of the octanoyl moiety bound to the lipoyl domains of lipoate-dependent enzymes, thereby converting the octanoylated domains into lipoylated derivatives. The protein is Lipoyl synthase, mitochondrial (Lias) of Rattus norvegicus (Rat).